Reading from the N-terminus, the 223-residue chain is Urease subunit alpha (223 aa).

Residues 1–101 form a urease gamma region; it reads MHFTQQQLQR…LVTIHEPIAN (101 aa). The urease beta stretch occupies residues 102-223; the sequence is DDKIKAGEIF…LSKAKEKGFL (122 aa).

The protein in the N-terminal section; belongs to the urease gamma subunit family. It in the C-terminal section; belongs to the urease beta subunit family. In terms of assembly, heterohexamer of 3 UreA (alpha) and 3 UreB (beta) subunits.

Its subcellular location is the cytoplasm. The catalysed reaction is urea + 2 H2O + H(+) = hydrogencarbonate + 2 NH4(+). It participates in nitrogen metabolism; urea degradation; CO(2) and NH(3) from urea (urease route): step 1/1. The chain is Urease subunit alpha from Campylobacter lari.